Consider the following 142-residue polypeptide: Hemoglobin subunit alpha (142 aa).

The region spanning 1-142 (VLSAADKNNV…VSTVLTSKYR (142 aa)) is the Globin domain. Serine 3 carries the phosphoserine modification. N6-succinyllysine is present on residues lysine 7 and lysine 11. Residue lysine 16 is modified to N6-acetyllysine; alternate. An N6-succinyllysine; alternate modification is found at lysine 16. Tyrosine 24 carries the post-translational modification Phosphotyrosine. Serine 35 bears the Phosphoserine mark. The residue at position 40 (lysine 40) is an N6-succinyllysine. Position 58 (histidine 58) interacts with O2. Heme b is bound at residue histidine 87. Residue serine 102 is modified to Phosphoserine. Threonine 108 bears the Phosphothreonine mark. Phosphoserine is present on serine 125. Threonine 135 and threonine 138 each carry phosphothreonine. Residue serine 139 is modified to Phosphoserine.

Belongs to the globin family. As to quaternary structure, heterotetramer of two alpha chains and two beta chains. Red blood cells.

Functionally, involved in oxygen transport from the lung to the various peripheral tissues. Its function is as follows. Hemopressin acts as an antagonist peptide of the cannabinoid receptor CNR1. Hemopressin-binding efficiently blocks cannabinoid receptor CNR1 and subsequent signaling. The polypeptide is Hemoglobin subunit alpha (HBA) (Procavia capensis habessinica (Abyssinian hyrax)).